Here is a 619-residue protein sequence, read N- to C-terminus: 1-deoxy-D-xylulose-5-phosphate synthase (619 aa).

Residues His-76 and 117–119 (AHS) each bind thiamine diphosphate. Asp-148 lines the Mg(2+) pocket. Residues 149–150 (GA), Asn-177, Tyr-284, and Glu-366 each bind thiamine diphosphate. Mg(2+) is bound at residue Asn-177.

The protein belongs to the transketolase family. DXPS subfamily. In terms of assembly, homodimer. Requires Mg(2+) as cofactor. It depends on thiamine diphosphate as a cofactor.

The catalysed reaction is D-glyceraldehyde 3-phosphate + pyruvate + H(+) = 1-deoxy-D-xylulose 5-phosphate + CO2. The protein operates within metabolic intermediate biosynthesis; 1-deoxy-D-xylulose 5-phosphate biosynthesis; 1-deoxy-D-xylulose 5-phosphate from D-glyceraldehyde 3-phosphate and pyruvate: step 1/1. In terms of biological role, catalyzes the acyloin condensation reaction between C atoms 2 and 3 of pyruvate and glyceraldehyde 3-phosphate to yield 1-deoxy-D-xylulose-5-phosphate (DXP). The protein is 1-deoxy-D-xylulose-5-phosphate synthase of Azoarcus sp. (strain BH72).